Reading from the N-terminus, the 79-residue chain is DNA gyrase inhibitor YacG (79 aa).

Zn(2+)-binding residues include C7, C10, C26, and C30.

It belongs to the DNA gyrase inhibitor YacG family. In terms of assembly, interacts with GyrB. Zn(2+) serves as cofactor.

In terms of biological role, inhibits all the catalytic activities of DNA gyrase by preventing its interaction with DNA. Acts by binding directly to the C-terminal domain of GyrB, which probably disrupts DNA binding by the gyrase. The sequence is that of DNA gyrase inhibitor YacG from Shewanella halifaxensis (strain HAW-EB4).